The chain runs to 150 residues: Cytochrome c oxidase subunit 5A, mitochondrial (150 aa).

The N-terminal 41 residues, 1 to 41, are a transit peptide targeting the mitochondrion; that stretch reads MLGAALRRCAVAATARAGPRGLLHSAPTPGPAAAIQSVRCY. Residues 2 to 17 carry the SIFI-degron motif; that stretch reads LGAALRRCAVAATARA. N6-acetyllysine occurs at positions 87 and 113. T141 carries the post-translational modification Phosphothreonine.

Belongs to the cytochrome c oxidase subunit 5A family. Component of the cytochrome c oxidase (complex IV, CIV), a multisubunit enzyme composed of 14 subunits. The complex is composed of a catalytic core of 3 subunits MT-CO1, MT-CO2 and MT-CO3, encoded in the mitochondrial DNA, and 11 supernumerary subunits COX4I, COX5A, COX5B, COX6A, COX6B, COX6C, COX7A, COX7B, COX7C, COX8 and NDUFA4, which are encoded in the nuclear genome. The complex exists as a monomer or a dimer and forms supercomplexes (SCs) in the inner mitochondrial membrane with NADH-ubiquinone oxidoreductase (complex I, CI) and ubiquinol-cytochrome c oxidoreductase (cytochrome b-c1 complex, complex III, CIII), resulting in different assemblies (supercomplex SCI(1)III(2)IV(1) and megacomplex MCI(2)III(2)IV(2)). Interacts with AFG1L. Interacts with RAB5IF. In response to mitochondrial stress, the precursor protein is ubiquitinated by the SIFI complex in the cytoplasm before mitochondrial import, leading to its degradation. Within the SIFI complex, UBR4 initiates ubiquitin chain that are further elongated or branched by KCMF1.

The protein localises to the mitochondrion inner membrane. Its pathway is energy metabolism; oxidative phosphorylation. In terms of biological role, component of the cytochrome c oxidase, the last enzyme in the mitochondrial electron transport chain which drives oxidative phosphorylation. The respiratory chain contains 3 multisubunit complexes succinate dehydrogenase (complex II, CII), ubiquinol-cytochrome c oxidoreductase (cytochrome b-c1 complex, complex III, CIII) and cytochrome c oxidase (complex IV, CIV), that cooperate to transfer electrons derived from NADH and succinate to molecular oxygen, creating an electrochemical gradient over the inner membrane that drives transmembrane transport and the ATP synthase. Cytochrome c oxidase is the component of the respiratory chain that catalyzes the reduction of oxygen to water. Electrons originating from reduced cytochrome c in the intermembrane space (IMS) are transferred via the dinuclear copper A center (CU(A)) of subunit 2 and heme A of subunit 1 to the active site in subunit 1, a binuclear center (BNC) formed by heme A3 and copper B (CU(B)). The BNC reduces molecular oxygen to 2 water molecules using 4 electrons from cytochrome c in the IMS and 4 protons from the mitochondrial matrix. This Cebuella pygmaea (Pygmy marmoset) protein is Cytochrome c oxidase subunit 5A, mitochondrial (COX5A).